Reading from the N-terminus, the 590-residue chain is Aspartate--tRNA(Asp/Asn) ligase (590 aa).

Glu-172 provides a ligand contact to L-aspartate. The segment at 196–199 (QLFK) is aspartate. Arg-218 is an L-aspartate binding site. Residues 218 to 220 (RDE) and Gln-227 each bind ATP. His-449 contacts L-aspartate. An ATP-binding site is contributed by Glu-484. L-aspartate is bound at residue Arg-491. Residue 536-539 (GIDR) coordinates ATP.

This sequence belongs to the class-II aminoacyl-tRNA synthetase family. Type 1 subfamily. As to quaternary structure, homodimer.

It is found in the cytoplasm. It catalyses the reaction tRNA(Asx) + L-aspartate + ATP = L-aspartyl-tRNA(Asx) + AMP + diphosphate. In terms of biological role, aspartyl-tRNA synthetase with relaxed tRNA specificity since it is able to aspartylate not only its cognate tRNA(Asp) but also tRNA(Asn). Reaction proceeds in two steps: L-aspartate is first activated by ATP to form Asp-AMP and then transferred to the acceptor end of tRNA(Asp/Asn). This Francisella tularensis subsp. tularensis (strain SCHU S4 / Schu 4) protein is Aspartate--tRNA(Asp/Asn) ligase.